A 415-amino-acid chain; its full sequence is Probable G-protein coupled receptor 19 (415 aa).

Topologically, residues 1-69 (MGFDHRMETD…LNPGEVATAS (69 aa)) are extracellular. Residues Asn25 and Asn52 are each glycosylated (N-linked (GlcNAc...) asparagine). A helical transmembrane segment spans residues 70-90 (IFFGALWLFSIFGNSLVCLVI). The Cytoplasmic segment spans residues 91 to 102 (HRSRRTQSTTNY). Residues 103–123 (FVVSMACADLLISVASTPFVV) traverse the membrane as a helical segment. The Extracellular segment spans residues 124–152 (LQFTTGRWTLGSAMCKVVRYFQYLTPGVQ). Cys138 and Cys210 are joined by a disulfide. The chain crosses the membrane as a helical span at residues 153 to 173 (IYVLLSICIDRFYTIVYPLSF). The Cytoplasmic portion of the chain corresponds to 174–182 (KVSREKAKR). Residues 183–203 (MIAASWILDAAFVTPVFFFYG) form a helical membrane-spanning segment. The Extracellular segment spans residues 204-221 (SNWDSHCNYFLPPSWEGT). A helical transmembrane segment spans residues 222–242 (AYTVIHFLVGFVIPSVLIILF). The Cytoplasmic portion of the chain corresponds to 243–277 (YQKVIKYIWRIGTDGRTLRRTMNIVPRTKVKTVKM). The chain crosses the membrane as a helical span at residues 278–298 (FLLLNLVFLFSWLPFHVAQLW). Over 299-309 (HPHEQDYRKSS) the chain is Extracellular. The chain crosses the membrane as a helical span at residues 310 to 332 (LVFTAVTWVSFSSSASKPTLYSI). The Cytoplasmic portion of the chain corresponds to 333 to 415 (YNANFRRGMK…INSNPPNTFV (83 aa)).

This sequence belongs to the G-protein coupled receptor 1 family. In terms of tissue distribution, abundant expression in the brain.

Its subcellular location is the cell membrane. G-protein coupled receptor that plays a role in the regulation of circadian rhythms and energy metabolism. Participates in maintaining proper circadian gene expression in the suprachiasmatic nucleus (SCN), the locus of the master circadian clock in the brain. May function as a coordinator of aging-associated metabolic dysfunction, stress response, DNA integrity management, and eventual senescence. Upon binding to adropin, modulates mitochondrial energy metabolism via the p44/42-PDK4 signaling pathway, influencing pyruvate dehydrogenase activity. The sequence is that of Probable G-protein coupled receptor 19 (Gpr19) from Rattus norvegicus (Rat).